Here is a 666-residue protein sequence, read N- to C-terminus: UvrABC system protein B (666 aa).

The Helicase ATP-binding domain maps to 26 to 414 (DSFQKGEKKV…KVVEQIIRPT (389 aa)). Position 39–46 (39–46 (GVTGSGKT)) interacts with ATP. A Beta-hairpin motif is present at residues 92–115 (YYDYYQPEAYVPSSDTFIEKDSSI). The Helicase C-terminal domain occupies 429–591 (QIEDLLVEIR…ITPLTIKKEV (163 aa)). Positions 625 to 660 (EVLKEKLREEMMKAAKELDFERAAILRDKMLSIQTE) constitute a UVR domain.

This sequence belongs to the UvrB family. As to quaternary structure, forms a heterotetramer with UvrA during the search for lesions. Interacts with UvrC in an incision complex.

It localises to the cytoplasm. Its function is as follows. The UvrABC repair system catalyzes the recognition and processing of DNA lesions. A damage recognition complex composed of 2 UvrA and 2 UvrB subunits scans DNA for abnormalities. Upon binding of the UvrA(2)B(2) complex to a putative damaged site, the DNA wraps around one UvrB monomer. DNA wrap is dependent on ATP binding by UvrB and probably causes local melting of the DNA helix, facilitating insertion of UvrB beta-hairpin between the DNA strands. Then UvrB probes one DNA strand for the presence of a lesion. If a lesion is found the UvrA subunits dissociate and the UvrB-DNA preincision complex is formed. This complex is subsequently bound by UvrC and the second UvrB is released. If no lesion is found, the DNA wraps around the other UvrB subunit that will check the other stand for damage. The protein is UvrABC system protein B of Leptospira interrogans serogroup Icterohaemorrhagiae serovar copenhageni (strain Fiocruz L1-130).